Reading from the N-terminus, the 286-residue chain is Protoheme IX farnesyltransferase (286 aa).

A run of 8 helical transmembrane segments spans residues 14–31 (FRLTSTVAFSSGMGYILA), 38–58 (WLNLVLFLIGGFSITVSANII), 94–114 (LFLIAGTVILAVYSTLNALIL), 135–155 (IAVFIGAFPGAFPPMIGWIAV), 165–185 (VLFAIQFLWQFPHFWAIAWVL), 207–227 (TATIIMTYTLCLLPLGFLPYL), 228–248 (FGMSGITSAYIALACGILFFF), and 262–282 (ALLLMFGSFLYLPIVQIAFVL).

The protein belongs to the UbiA prenyltransferase family. Protoheme IX farnesyltransferase subfamily.

The protein resides in the cell inner membrane. It carries out the reaction heme b + (2E,6E)-farnesyl diphosphate + H2O = Fe(II)-heme o + diphosphate. It participates in porphyrin-containing compound metabolism; heme O biosynthesis; heme O from protoheme: step 1/1. Its function is as follows. Converts heme B (protoheme IX) to heme O by substitution of the vinyl group on carbon 2 of heme B porphyrin ring with a hydroxyethyl farnesyl side group. The sequence is that of Protoheme IX farnesyltransferase from Cytophaga hutchinsonii (strain ATCC 33406 / DSM 1761 / CIP 103989 / NBRC 15051 / NCIMB 9469 / D465).